A 155-amino-acid chain; its full sequence is Small ribosomal subunit protein uS7c (155 aa).

It belongs to the universal ribosomal protein uS7 family. Part of the 30S ribosomal subunit.

It is found in the plastid. The protein localises to the chloroplast. In terms of biological role, one of the primary rRNA binding proteins, it binds directly to 16S rRNA where it nucleates assembly of the head domain of the 30S subunit. This is Small ribosomal subunit protein uS7c (rps7) from Typha angustifolia (Narrow leaf cattail).